The following is a 311-amino-acid chain: MADPLQHKGAAKTSRIPIKIVPQERQRLPPWIRAKAPSLPNVGRLKGILREAKLHTVCEEASCPNLGECFGHGTATFMILGDLCTRRCPFCDVGHGTPLPPDADEPRHLAETIALMALKYVVITSVDRDDLRDGGAGHFAECIAAVREKSPATRIEILTPDFRGRLDKALAALDRAPPDVMNHNLETVPRLYKAARPGADYAHSLKLLQDFRTRHPDIPTKSGLMLGLGETDDEILEVMRDLRAHGVDMLTLGQYLQPSRHHLAVLRFVTPERFAQFEQEALAMGFRHAACGPMVRSSYHADQQAAAAAAG.

The [4Fe-4S] cluster site is built by Cys-58, Cys-63, Cys-69, Cys-84, Cys-88, Cys-91, and Ser-298. The Radical SAM core domain occupies 70–287 (FGHGTATFMI…EQEALAMGFR (218 aa)).

Belongs to the radical SAM superfamily. Lipoyl synthase family. [4Fe-4S] cluster serves as cofactor.

Its subcellular location is the cytoplasm. It carries out the reaction [[Fe-S] cluster scaffold protein carrying a second [4Fe-4S](2+) cluster] + N(6)-octanoyl-L-lysyl-[protein] + 2 oxidized [2Fe-2S]-[ferredoxin] + 2 S-adenosyl-L-methionine + 4 H(+) = [[Fe-S] cluster scaffold protein] + N(6)-[(R)-dihydrolipoyl]-L-lysyl-[protein] + 4 Fe(3+) + 2 hydrogen sulfide + 2 5'-deoxyadenosine + 2 L-methionine + 2 reduced [2Fe-2S]-[ferredoxin]. Its pathway is protein modification; protein lipoylation via endogenous pathway; protein N(6)-(lipoyl)lysine from octanoyl-[acyl-carrier-protein]: step 2/2. Catalyzes the radical-mediated insertion of two sulfur atoms into the C-6 and C-8 positions of the octanoyl moiety bound to the lipoyl domains of lipoate-dependent enzymes, thereby converting the octanoylated domains into lipoylated derivatives. This is Lipoyl synthase from Thiobacillus denitrificans (strain ATCC 25259 / T1).